A 264-amino-acid chain; its full sequence is tRNA pseudouridine synthase A (264 aa).

D51 functions as the Nucleophile in the catalytic mechanism. Residue Y109 coordinates substrate.

It belongs to the tRNA pseudouridine synthase TruA family. As to quaternary structure, homodimer.

The catalysed reaction is uridine(38/39/40) in tRNA = pseudouridine(38/39/40) in tRNA. Its function is as follows. Formation of pseudouridine at positions 38, 39 and 40 in the anticodon stem and loop of transfer RNAs. The protein is tRNA pseudouridine synthase A of Actinobacillus succinogenes (strain ATCC 55618 / DSM 22257 / CCUG 43843 / 130Z).